A 524-amino-acid chain; its full sequence is MGKPARKGCDSKRFLKNNWLLLSTVVAVVLGIVIGVLVREYSNLSTLDKFYFAFPGEILMRMLKLVILPLIVSSMITGVAALDSNVSGKIGLRAVLYYFCTTIIAVILGIVLVVSIKPGVTQKVDEIDRTGSTPEVSTVDAMLDLIRNMFPENLVQACFQQYKTTREEVTASDDTGKNGTEESVTAVMTTAVSENRTKEYRVVGLYSDGINVLGLIVFCLVFGLVIGKMGEKGQILVDFFNALSDATMKIVQIIMCYMPLGILFLIAGKIIEVEDWEIFRKLGLYMVTVLSGLAIHSIVILPLIYFIVVRKNPFRFAMGMTQALLTALMISSSSATLPVTFRCAEEKNRVDKRITRFVLPVGATINMDGTALYEAVAAVFIAQLNDMDLSIGQIITISVTATAASIGAAGVPQAGLVTMVIVLSAVGLPAEDVTLIIAVDWLLDRFRTVVNVLGDAFGTGIVEKLSKKELEQMDVSSEVNIVNPFALESATLDNEDSDTKKSYINGGFAVDKSDTISFTQTSQF.

Residues 1–18 (MGKPARKGCDSKRFLKNN) lie on the Cytoplasmic side of the membrane. Residues 19–38 (WLLLSTVVAVVLGIVIGVLV) form a helical membrane-spanning segment. The Extracellular segment spans residues 39–61 (REYSNLSTLDKFYFAFPGEILMR). N-linked (GlcNAc...) asparagine glycosylation is present at Asn43. A helical membrane pass occupies residues 62–82 (MLKLVILPLIVSSMITGVAAL). The Cytoplasmic segment spans residues 83–93 (DSNVSGKIGLR). Residues 94-114 (AVLYYFCTTIIAVILGIVLVV) form a helical membrane-spanning segment. Na(+)-binding residues include Tyr98, Thr101, and Thr102. At 115–205 (SIKPGVTQKV…RTKEYRVVGL (91 aa)) the chain is on the extracellular side. Asn178 and Asn195 each carry an N-linked (GlcNAc...) asparagine glycan. A helical transmembrane segment spans residues 206-229 (YSDGINVLGLIVFCLVFGLVIGKM). The Cytoplasmic segment spans residues 230-238 (GEKGQILVD). The helical transmembrane segment at 239–266 (FFNALSDATMKIVQIIMCYMPLGILFLI) threads the bilayer. At 267–286 (AGKIIEVEDWEIFRKLGLYM) the chain is on the extracellular side. A helical transmembrane segment spans residues 287–308 (VTVLSGLAIHSIVILPLIYFIV). Residues 309–313 (VRKNP) lie on the Cytoplasmic side of the membrane. The discontinuously helical intramembrane region spans 314 to 344 (FRFAMGMTQALLTALMISSSSATLPVTFRCA). L-aspartate contacts are provided by Ser331 and Ser333. The Cytoplasmic segment spans residues 345-353 (EEKNRVDKR). Residues 354-380 (ITRFVLPVGATINMDGTALYEAVAAVF) form a helical membrane-spanning segment. Na(+) is bound by residues Gly362, Thr364, Asn366, and Asp368. An L-aspartate-binding site is contributed by Thr370. At 381-393 (IAQLNDMDLSIGQ) the chain is on the extracellular side. The discontinuously helical intramembrane region spans 394–427 (IITISVTATAASIGAAGVPQAGLVTMVIVLSAVG). Ser405, Ile406, and Ala408 together coordinate Na(+). An L-aspartate-binding site is contributed by Val411. Residues 428–440 (LPAEDVTLIIAVD) lie on the Extracellular side of the membrane. A helical membrane pass occupies residues 441 to 462 (WLLDRFRTVVNVLGDAFGTGIV). 3 residues coordinate L-aspartate: Arg447, Thr448, and Asn451. Asn451 and Asp455 together coordinate Na(+). Topologically, residues 463-524 (EKLSKKELEQ…TISFTQTSQF (62 aa)) are cytoplasmic. A phosphoserine mark is found at Ser517 and Ser522.

This sequence belongs to the dicarboxylate/amino acid:cation symporter (DAACS) (TC 2.A.23) family. SLC1A1 subfamily. Homotrimer. Interacts with ARL6IP5. Interacts with RTN2 (via N-terminus); the interaction promotes cell surface expression of SLC1A1. Interacts with SORCS2; this interaction is important for normal expression at the cell membrane. In terms of tissue distribution, brain, but also small intestine, kidney, liver and heart.

Its subcellular location is the cell membrane. The protein resides in the apical cell membrane. The protein localises to the synapse. It is found in the synaptosome. It localises to the early endosome membrane. Its subcellular location is the late endosome membrane. The protein resides in the recycling endosome membrane. The catalysed reaction is K(+)(in) + L-glutamate(out) + 3 Na(+)(out) + H(+)(out) = K(+)(out) + L-glutamate(in) + 3 Na(+)(in) + H(+)(in). It catalyses the reaction K(+)(in) + L-aspartate(out) + 3 Na(+)(out) + H(+)(out) = K(+)(out) + L-aspartate(in) + 3 Na(+)(in) + H(+)(in). It carries out the reaction D-aspartate(out) + K(+)(in) + 3 Na(+)(out) + H(+)(out) = D-aspartate(in) + K(+)(out) + 3 Na(+)(in) + H(+)(in). The enzyme catalyses K(+)(in) + L-cysteine(out) + 3 Na(+)(out) + H(+)(out) = K(+)(out) + L-cysteine(in) + 3 Na(+)(in) + H(+)(in). In terms of biological role, sodium-dependent, high-affinity amino acid transporter that mediates the uptake of L-glutamate and also L-aspartate and D-aspartate. Can also transport L-cysteine. Functions as a symporter that transports one amino acid molecule together with two or three Na(+) ions and one proton, in parallel with the counter-transport of one K(+) ion. Mediates Cl(-) flux that is not coupled to amino acid transport; this avoids the accumulation of negative charges due to aspartate and Na(+) symport. Plays an important role in L-glutamate and L-aspartate reabsorption in renal tubuli. Plays a redundant role in the rapid removal of released glutamate from the synaptic cleft, which is essential for terminating the postsynaptic action of glutamate. Contributes to glutathione biosynthesis and protection against oxidative stress via its role in L-glutamate and L-cysteine transport. Negatively regulated by ARL6IP5. The polypeptide is Excitatory amino acid transporter 3 (SLC1A1) (Oryctolagus cuniculus (Rabbit)).